Here is a 188-residue protein sequence, read N- to C-terminus: MTSPWSAFPVQIPQPSIRGLSQITKSLFISNGVAANNKLLLSSNQITTVINVSVEVANTFYEDIQYVQVPVVDAPVARLSNFFDSVADRIHSVEMQKGRTLLHCAAGVSRSAALCLAYLMKYHAMSLVDAHTWTKSCRPIIRPNSGFWEQLIHYELQLFGKNTMQMMDSPMGRIPDIYEKETRLMIPL.

One can recognise a Tyrosine-protein phosphatase domain in the interval G19–G160. Positions M95–I141 are sufficient for mitochondrial localization. The active-site Phosphocysteine intermediate is the C104.

It belongs to the protein-tyrosine phosphatase family. Non-receptor class dual specificity subfamily.

The protein resides in the cytoplasm. The protein localises to the nucleus. It localises to the mitochondrion inner membrane. It carries out the reaction O-phospho-L-tyrosyl-[protein] + H2O = L-tyrosyl-[protein] + phosphate. The enzyme catalyses O-phospho-L-seryl-[protein] + H2O = L-seryl-[protein] + phosphate. The catalysed reaction is O-phospho-L-threonyl-[protein] + H2O = L-threonyl-[protein] + phosphate. Its function is as follows. Can dephosphorylate single and diphosphorylated synthetic MAPK peptides, with preference for the phosphotyrosine and diphosphorylated forms over phosphothreonine. In vitro, dephosphorylates p-nitrophenyl phosphate (pNPP). This chain is Dual specificity protein phosphatase 18 (Dusp18), found in Mus musculus (Mouse).